The sequence spans 102 residues: UPF0058 protein MTH_224 (102 aa).

The protein belongs to the UPF0058 family.

This is UPF0058 protein MTH_224 from Methanothermobacter thermautotrophicus (strain ATCC 29096 / DSM 1053 / JCM 10044 / NBRC 100330 / Delta H) (Methanobacterium thermoautotrophicum).